We begin with the raw amino-acid sequence, 916 residues long: Bifunctional aspartokinase/homoserine dehydrogenase 2, chloroplastic (916 aa).

Residues 1-87 constitute a chloroplast transit peptide; it reads MATLKPSFTV…VDQVQIPKGE (87 aa). An aspartokinase region spans residues 88-336; that stretch reads MWSVHKFGGT…VNEAVILQTL (249 aa). Residues 337 to 562 form an interface region; that stretch reads SYQEAWEMSY…LSRTTLAMGI (226 aa). ACT domains follow at residues 412–487 and 493–570; these read VEGT…VIPN and AVGQ…LIGA. The tract at residues 563-916 is homoserine dehydrogenase; it reads VGPGLIGATL…RLASYLGAPS (354 aa). I568 contacts NAD(+). NADP(+) contacts are provided by I568, K600, T649, and K673. Residue I568 coordinates NADPH. T649 serves as a coordination point for NAD(+). T649 and K673 together coordinate NADPH. 4 residues coordinate Na(+): E700, V703, A705, and L707. NADP(+) is bound by residues G758 and E761. L-homoserine is bound by residues E761 and D772. K776 acts as the Proton donor in catalysis. An NAD(+)-binding site is contributed by G893. G893 is a binding site for NADP(+). Residue G893 coordinates NADPH.

This sequence in the N-terminal section; belongs to the aspartokinase family. The protein in the C-terminal section; belongs to the homoserine dehydrogenase family. In terms of assembly, homo- or heterodimer. It depends on a metal cation as a cofactor.

It is found in the plastid. It localises to the chloroplast. The catalysed reaction is L-homoserine + NADP(+) = L-aspartate 4-semialdehyde + NADPH + H(+). It catalyses the reaction L-homoserine + NAD(+) = L-aspartate 4-semialdehyde + NADH + H(+). The enzyme catalyses L-aspartate + ATP = 4-phospho-L-aspartate + ADP. It functions in the pathway amino-acid biosynthesis; L-lysine biosynthesis via DAP pathway; (S)-tetrahydrodipicolinate from L-aspartate: step 1/4. It participates in amino-acid biosynthesis; L-methionine biosynthesis via de novo pathway; L-homoserine from L-aspartate: step 1/3. The protein operates within amino-acid biosynthesis; L-methionine biosynthesis via de novo pathway; L-homoserine from L-aspartate: step 3/3. Its pathway is amino-acid biosynthesis; L-threonine biosynthesis; L-threonine from L-aspartate: step 1/5. It functions in the pathway amino-acid biosynthesis; L-threonine biosynthesis; L-threonine from L-aspartate: step 3/5. Its activity is regulated as follows. Threonine interaction with Gln-443 leads to inhibition of aspartate kinase activity and facilitates the binding of a second threonine on Gln-524, leading to a partial inhibition of homoserine dehydrogenase activity (25% of activity remaining at saturation with threonine). Homoserine dehydrogenase activity is also partially inhibited by cysteine (15% of activity remaining at saturation with cysteine). No synergy between threonine and cysteine for the inhibition. 13-fold activation of aspartate kinase activity by cysteine, isoleucine, valine, serine and alanine at 2.5 mM and 4-fold activation by leucine at 2.5 mM, but no activation of homoserine dehydrogenase activity. Its function is as follows. Bifunctional aspartate kinase and homoserine dehydrogenase that catalyzes the first and the third steps toward the synthesis of lysine, methionine and threonine from aspartate. In Arabidopsis thaliana (Mouse-ear cress), this protein is Bifunctional aspartokinase/homoserine dehydrogenase 2, chloroplastic (AKHSDH2).